Here is a 187-residue protein sequence, read N- to C-terminus: Putative adenylate kinase (187 aa).

ATP contacts are provided by Gly-10, Gly-12, Lys-13, Thr-14, and Val-15. The interval 30–53 (SLSQFVIENKLYTEYDELRQSYII) is NMP. Residues 103–113 (GRGWADIKVAE) form an LID region. Arg-104 contributes to the ATP binding site.

Belongs to the adenylate kinase family. AK6 subfamily. As to quaternary structure, interacts with uS11. Not a structural component of 40S pre-ribosomes, but transiently interacts with them by binding to uS11.

It catalyses the reaction AMP + ATP = 2 ADP. The catalysed reaction is ATP + H2O = ADP + phosphate + H(+). In terms of biological role, broad-specificity nucleoside monophosphate (NMP) kinase that catalyzes the reversible transfer of the terminal phosphate group between nucleoside triphosphates and monophosphates. Also has ATPase activity. Involved in the late maturation steps of the 30S ribosomal particles, specifically 16S rRNA maturation. While NMP activity is not required for ribosome maturation, ATPase activity is. Associates transiently with small ribosomal subunit protein uS11. ATP hydrolysis breaks the interaction with uS11. May temporarily remove uS11 from the ribosome to enable a conformational change of the ribosomal RNA that is needed for the final maturation step of the small ribosomal subunit. The protein is Putative adenylate kinase of Saccharolobus islandicus (strain M.16.4 / Kamchatka #3) (Sulfolobus islandicus).